Reading from the N-terminus, the 419-residue chain is Synaptotagmin-1 (419 aa).

The Vesicular segment spans residues 1–57 (MVSESHHEALAAPPVTTVATVLPSNATEPASPGEGKEDAFSKLKEKFMNELHKIPLP). N25 is a glycosylation site (N-linked (GlcNAc...) asparagine). The helical transmembrane segment at 58 to 80 (PWALIAIAIVAVLLVLTCCFCIC) threads the bilayer. 5 S-palmitoyl cysteine lipidation sites follow: C75, C76, C78, C80, and C83. Residues 81–419 (KKCLFKKKNK…EVDAMLAVKK (339 aa)) lie on the Cytoplasmic side of the membrane. The disordered stretch occupies residues 108 to 139 (KDLGKTMKDQDDDAETGLTDGEEKEEPKEEEK). The segment covering 117 to 131 (QDDDAETGLTDGEEK) has biased composition (acidic residues). T126 carries the post-translational modification Phosphothreonine. Positions 133 to 379 (EPKEEEKLGK…AIGKVFVGYN (247 aa)) are phospholipid binding. In terms of domain architecture, C2 1 spans 139–258 (KLGKLQYSLD…DFGHVTEEWR (120 aa)). L169, D170, and D176 together coordinate Ca(2+). Phosphotyrosine is present on Y227. Ca(2+) contacts are provided by D228, F229, D230, S233, K234, and D236. The residue at position 262 (S262) is a Phosphoserine. Residues 270-403 (KLGDICFSLR…NPRRPIAQWH (134 aa)) enclose the C2 2 domain. Positions 301 and 307 each coordinate Ca(2+). Phosphoserine is present on residues S340 and S342. The Ca(2+) site is built by D361, D363, and D369.

It belongs to the synaptotagmin family. As to quaternary structure, homotetramer. Heterodimer; heterodimerizes with SYT2 in presence of calcium. Interacts with SCAMP5. Interacts with STON2. Forms a complex with SV2B, syntaxin 1 and SNAP25. Interacts with SV2A, SV2B and SV2C. Interacts with RIMS1. Interacts with PRRT2. Interacts with DNAJC5 in a phosphorylation-dependent manner. Interacts (via N-terminus) with RAB3A. Interacts with SYT12. Interacts with calmodulin. Interacts with DNM1 (via C-terminal proline-rich domain (PRD)); this interaction facilitates vesicle fission during clathrin-mediated endocytosis (CME). The cofactor is Ca(2+). Glycosylated.

The protein resides in the cytoplasmic vesicle. It localises to the secretory vesicle membrane. Its subcellular location is the secretory vesicle. It is found in the synaptic vesicle membrane. The protein localises to the chromaffin granule membrane. The protein resides in the cytoplasm. Functionally, calcium sensor that participates in triggering neurotransmitter release at the synapse. May have a regulatory role in the membrane interactions during trafficking of synaptic vesicles at the active zone of the synapse. It binds acidic phospholipids with a specificity that requires the presence of both an acidic head group and a diacyl backbone. A Ca(2+)-dependent interaction between synaptotagmin and putative receptors for activated protein kinase C has also been reported. It can bind to at least three additional proteins in a Ca(2+)-independent manner; these are neurexins, syntaxin and AP2. Plays a role in dendrite formation by melanocytes. This chain is Synaptotagmin-1, found in Macaca fascicularis (Crab-eating macaque).